The sequence spans 316 residues: Acetyl-coenzyme A carboxylase carboxyl transferase subunit alpha (316 aa).

The 268-residue stretch at 24-291 (NIKDKADIVD…KEALIQQLNE (268 aa)) folds into the CoA carboxyltransferase C-terminal domain.

The protein belongs to the AccA family. As to quaternary structure, acetyl-CoA carboxylase is a heterohexamer composed of biotin carboxyl carrier protein (AccB), biotin carboxylase (AccC) and two subunits each of ACCase subunit alpha (AccA) and ACCase subunit beta (AccD).

Its subcellular location is the cytoplasm. It carries out the reaction N(6)-carboxybiotinyl-L-lysyl-[protein] + acetyl-CoA = N(6)-biotinyl-L-lysyl-[protein] + malonyl-CoA. The protein operates within lipid metabolism; malonyl-CoA biosynthesis; malonyl-CoA from acetyl-CoA: step 1/1. In terms of biological role, component of the acetyl coenzyme A carboxylase (ACC) complex. First, biotin carboxylase catalyzes the carboxylation of biotin on its carrier protein (BCCP) and then the CO(2) group is transferred by the carboxyltransferase to acetyl-CoA to form malonyl-CoA. The sequence is that of Acetyl-coenzyme A carboxylase carboxyl transferase subunit alpha from Ruthia magnifica subsp. Calyptogena magnifica.